Here is a 125-residue protein sequence, read N- to C-terminus: Large ribosomal subunit protein bL12 (125 aa).

This sequence belongs to the bacterial ribosomal protein bL12 family. In terms of assembly, homodimer. Part of the ribosomal stalk of the 50S ribosomal subunit. Forms a multimeric L10(L12)X complex, where L10 forms an elongated spine to which 2 to 4 L12 dimers bind in a sequential fashion. Binds GTP-bound translation factors.

Forms part of the ribosomal stalk which helps the ribosome interact with GTP-bound translation factors. Is thus essential for accurate translation. The chain is Large ribosomal subunit protein bL12 from Gluconacetobacter diazotrophicus (strain ATCC 49037 / DSM 5601 / CCUG 37298 / CIP 103539 / LMG 7603 / PAl5).